Here is a 221-residue protein sequence, read N- to C-terminus: Protein RER1D (221 aa).

4 helical membrane-spanning segments follow: residues Ile-41–Arg-58, Gly-64–Leu-84, Phe-128–Ile-148, and Leu-149–Phe-169. Residues Lys-200–Asp-221 are disordered. A compositionally biased stretch (polar residues) spans Ser-209–Asp-221.

Belongs to the RER1 family.

The protein resides in the membrane. Involved in the retrieval of endoplasmic reticulum membrane proteins from the early Golgi compartment. The polypeptide is Protein RER1D (Arabidopsis thaliana (Mouse-ear cress)).